Reading from the N-terminus, the 467-residue chain is tRNA dimethylallyltransferase (467 aa).

The N-terminal 47 residues, 1 to 47 (MAAAAAARAVPVSSGFRGLRRTLPLVVILGATGTGKSTLALQLGQRL), are a transit peptide targeting the mitochondrion. Residue 32-37 (TGTGKS) participates in dimethylallyl diphosphate binding. Interaction with substrate tRNA regions lie at residues 55–58 (DSMQ) and 183–187 (RKVAR). A core aggregation region region spans residues 221 to 230 (FPNPCILWLH). Positions 233-255 (QAVLDERLDKRVDDMLAAGLLEE) are interaction with isopentenylpyrophosphate transferase. Interaction with substrate tRNA regions lie at residues 281-283 (QSI) and 313-331 (ALKQ…WVKN). Residues 395-425 (HMCDLCDRIIIGDREWAAHLKSKSHLHQLKK) form a Matrin-type zinc finger. Residues 432 to 467 (DAVSATGSQSNSPDCDPERIEGESSGQHNQELKASV) are disordered. 2 positions are modified to phosphoserine: Ser-443 and Ser-455.

The protein belongs to the IPP transferase family.

It is found in the mitochondrion. Its subcellular location is the cytoplasm. It localises to the nucleus. It carries out the reaction adenosine(37) in tRNA + dimethylallyl diphosphate = N(6)-dimethylallyladenosine(37) in tRNA + diphosphate. Catalyzes the transfer of a dimethylallyl group onto the adenine at position 37 of both cytosolic and mitochondrial tRNAs, leading to the formation of N6-(dimethylallyl)adenosine (i6A37). Mediates modification of a limited subset of tRNAs: tRNA(Ser)(AGA), tRNA(Ser)(CGA), tRNA(Ser)(UGA), as well as partial modification of the selenocysteine tRNA(Ser)(UCA). TRIT1 is therefore required for selenoprotein expression. This is tRNA dimethylallyltransferase (Trit1) from Mus musculus (Mouse).